A 556-amino-acid chain; its full sequence is Chaperone protein HscC (556 aa).

The protein belongs to the heat shock protein 70 family.

Probable chaperone. Has ATPase activity. Not stimulated by DnaJ. This chain is Chaperone protein HscC (hscC), found in Escherichia coli (strain K12).